Reading from the N-terminus, the 417-residue chain is Gamma-glutamyl phosphate reductase (417 aa).

Belongs to the gamma-glutamyl phosphate reductase family.

It is found in the cytoplasm. It catalyses the reaction L-glutamate 5-semialdehyde + phosphate + NADP(+) = L-glutamyl 5-phosphate + NADPH + H(+). It participates in amino-acid biosynthesis; L-proline biosynthesis; L-glutamate 5-semialdehyde from L-glutamate: step 2/2. Its function is as follows. Catalyzes the NADPH-dependent reduction of L-glutamate 5-phosphate into L-glutamate 5-semialdehyde and phosphate. The product spontaneously undergoes cyclization to form 1-pyrroline-5-carboxylate. This Desulfitobacterium hafniense (strain DSM 10664 / DCB-2) protein is Gamma-glutamyl phosphate reductase.